A 232-amino-acid chain; its full sequence is Probable ADP-ribosylation factor GTPase-activating protein AGD15 (232 aa).

The region spanning 16 to 130 is the Arf-GAP domain; that stretch reads SKILEALLKH…RWVSPGAIQP (115 aa). The C4-type zinc-finger motif lies at 31 to 54; it reads CADCRSKAPRWASVNLGIFICMQC. Residues 203-232 are disordered; the sequence is PNQKNENFSSEVNQNRRTTIAPPSSWATFD. The segment covering 206–232 has biased composition (polar residues); sequence KNENFSSEVNQNRRTTIAPPSSWATFD.

GTPase-activating protein (GAP) for ADP ribosylation factor (ARF). The protein is Probable ADP-ribosylation factor GTPase-activating protein AGD15 (AGD15) of Arabidopsis thaliana (Mouse-ear cress).